Consider the following 272-residue polypeptide: Cyanophycinase (272 aa).

Catalysis depends on charge relay system residues Ser132, Glu150, and His174.

It belongs to the peptidase S51 family.

It catalyses the reaction [L-4-(L-arginin-2-N-yl)aspartate](n) + H2O = [L-4-(L-arginin-2-N-yl)aspartate](n-1) + L-4-(L-arginin-2-N-yl)aspartate. Its function is as follows. Exopeptidase that catalyzes the hydrolytic cleavage of multi-L-arginyl-poly-L-aspartic acid (cyanophycin; a water-insoluble reserve polymer) into aspartate-arginine dipeptides. The polypeptide is Cyanophycinase (cphB) (Geminocystis herdmanii (strain PCC 6308) (Synechocystis sp. (strain PCC 6308))).